We begin with the raw amino-acid sequence, 182 residues long: Flavin prenyltransferase UbiX (182 aa).

FMN is bound by residues 9–11 (GAS), serine 35, 86–89 (SIKT), and arginine 121. Dimethylallyl phosphate-binding residues include tyrosine 151 and arginine 167.

The protein belongs to the UbiX/PAD1 family.

The catalysed reaction is dimethylallyl phosphate + FMNH2 = prenylated FMNH2 + phosphate. Its function is as follows. Flavin prenyltransferase that catalyzes the synthesis of the prenylated FMN cofactor (prenyl-FMN) for 4-hydroxy-3-polyprenylbenzoic acid decarboxylase UbiD. The prenyltransferase is metal-independent and links a dimethylallyl moiety from dimethylallyl monophosphate (DMAP) to the flavin N5 and C6 atoms of FMN. The sequence is that of Flavin prenyltransferase UbiX from Archaeoglobus fulgidus (strain ATCC 49558 / DSM 4304 / JCM 9628 / NBRC 100126 / VC-16).